Here is a 396-residue protein sequence, read N- to C-terminus: Elongation factor Tu (396 aa).

The tr-type G domain maps to 10-206 (KPHVNVGTIG…AVDAYIPTPQ (197 aa)). Positions 19 to 26 (GHVDHGKT) are G1. Residue 19-26 (GHVDHGKT) participates in GTP binding. Thr-26 serves as a coordination point for Mg(2+). The G2 stretch occupies residues 60-64 (GITIA). Positions 81–84 (DCPG) are G3. GTP is bound by residues 81-85 (DCPGH) and 136-139 (NKVD). Residues 136–139 (NKVD) are G4. Residues 174 to 176 (SAL) form a G5 region.

It belongs to the TRAFAC class translation factor GTPase superfamily. Classic translation factor GTPase family. EF-Tu/EF-1A subfamily. Monomer.

It localises to the cytoplasm. The enzyme catalyses GTP + H2O = GDP + phosphate + H(+). Its function is as follows. GTP hydrolase that promotes the GTP-dependent binding of aminoacyl-tRNA to the A-site of ribosomes during protein biosynthesis. The sequence is that of Elongation factor Tu from Anaeromyxobacter dehalogenans (strain 2CP-C).